Reading from the N-terminus, the 112-residue chain is Nucleoid-associated protein FTH_1374 (112 aa).

Residues 1-27 form a disordered region; sequence MNFDMSKLMQQAQKMQEQMKKAQQERE. Residues 17-27 show a composition bias toward basic and acidic residues; that stretch reads EQMKKAQQERE.

This sequence belongs to the YbaB/EbfC family. In terms of assembly, homodimer.

The protein localises to the cytoplasm. It localises to the nucleoid. Functionally, binds to DNA and alters its conformation. May be involved in regulation of gene expression, nucleoid organization and DNA protection. The chain is Nucleoid-associated protein FTH_1374 from Francisella tularensis subsp. holarctica (strain OSU18).